The sequence spans 158 residues: Endoribonuclease YbeY (158 aa).

Zn(2+) is bound by residues His-117, His-121, and His-127.

This sequence belongs to the endoribonuclease YbeY family. It depends on Zn(2+) as a cofactor.

It localises to the cytoplasm. Single strand-specific metallo-endoribonuclease involved in late-stage 70S ribosome quality control and in maturation of the 3' terminus of the 16S rRNA. The protein is Endoribonuclease YbeY of Buchnera aphidicola subsp. Schizaphis graminum (strain Sg).